The primary structure comprises 243 residues: Pyrimidodiazepine synthase (243 aa).

The 83-residue stretch at 20–102 (GILRLYSMRF…YLDEQYPLRP (83 aa)) folds into the GST N-terminal domain. Cys30 acts as the Nucleophile in catalysis. Glutathione-binding positions include Lys57, Val70, and 86–87 (ES). Residues 107–230 (DPLKKVQDKL…VQAEFLRTRS (124 aa)) enclose the GST C-terminal domain.

It belongs to the GST superfamily. Omega family. As to quaternary structure, homodimer.

It carries out the reaction 2-amino-6-acetyl-3,7,8,9-tetrahydro-3H-pyrimido[4,5-b][1,4]diazepin-4-one + glutathione disulfide + H2O = 6-pyruvoyl-5,6,7,8-tetrahydropterin + 2 glutathione. In terms of biological role, mediates the conversion of 2-amino-4-oxo-6-pyruvoyl-5,6,7,8-tetrahydropteridine (6-PTP; also named 6-pyruvoyltetrahydropterin) to 2-amino-6-acetyl-3,7,8,9-tetrahydro-3H-pyrimido(4,5-b)[1,4]diazepin-4-one (pyrimidodiazepine or PDA), a key intermediate in red eye pigment drosopterin biosynthesis. This is Pyrimidodiazepine synthase from Drosophila melanogaster (Fruit fly).